An 86-amino-acid polypeptide reads, in one-letter code: Cytochrome c oxidase subunit 12, mitochondrial (86 aa).

The region spanning T30 to W73 is the CHCH domain. The short motif at C33 to C43 is the Cx9C motif element. Disulfide bonds link C33–C65 and C43–C54. Positions C54–C65 match the Cx10C motif motif.

Belongs to the cytochrome c oxidase subunit 6B family. As to quaternary structure, component of the cytochrome c oxidase (complex IV, CIV), a multisubunit enzyme composed of a catalytic core of 3 subunits and several supernumerary subunits. The complex exists as a monomer or a dimer and forms supercomplexes (SCs) in the inner mitochondrial membrane with ubiquinol-cytochrome c oxidoreductase (cytochrome b-c1 complex, complex III, CIII).

Its subcellular location is the mitochondrion inner membrane. The protein operates within energy metabolism; oxidative phosphorylation. Component of the cytochrome c oxidase, the last enzyme in the mitochondrial electron transport chain which drives oxidative phosphorylation. The respiratory chain contains 3 multisubunit complexes succinate dehydrogenase (complex II, CII), ubiquinol-cytochrome c oxidoreductase (cytochrome b-c1 complex, complex III, CIII) and cytochrome c oxidase (complex IV, CIV), that cooperate to transfer electrons derived from NADH and succinate to molecular oxygen, creating an electrochemical gradient over the inner membrane that drives transmembrane transport and the ATP synthase. Cytochrome c oxidase is the component of the respiratory chain that catalyzes the reduction of oxygen to water. Electrons originating from reduced cytochrome c in the intermembrane space (IMS) are transferred via the dinuclear copper A center (CU(A)) of subunit 2 and heme A of subunit 1 to the active site in subunit 1, a binuclear center (BNC) formed by heme A3 and copper B (CU(B)). The BNC reduces molecular oxygen to 2 water molecules using 4 electrons from cytochrome c in the IMS and 4 protons from the mitochondrial matrix. In Schizosaccharomyces pombe (strain 972 / ATCC 24843) (Fission yeast), this protein is Cytochrome c oxidase subunit 12, mitochondrial (cox12).